A 669-amino-acid polypeptide reads, in one-letter code: DNA mismatch repair protein MutL (669 aa).

Residues Phe-356–Ser-377 are disordered. Polar residues predominate over residues Asn-361 to Ser-377.

This sequence belongs to the DNA mismatch repair MutL/HexB family.

In terms of biological role, this protein is involved in the repair of mismatches in DNA. It is required for dam-dependent methyl-directed DNA mismatch repair. May act as a 'molecular matchmaker', a protein that promotes the formation of a stable complex between two or more DNA-binding proteins in an ATP-dependent manner without itself being part of a final effector complex. The chain is DNA mismatch repair protein MutL from Staphylococcus aureus (strain MSSA476).